The following is a 246-amino-acid chain: Sugar fermentation stimulation protein homolog (246 aa).

This sequence belongs to the SfsA family.

In Prochlorococcus marinus (strain MIT 9301), this protein is Sugar fermentation stimulation protein homolog.